Consider the following 847-residue polypeptide: Putative disease resistance RPP13-like protein 3 (847 aa).

The stretch at 24–41 forms a coiled coil; it reads LMGVKDDLEELKTELTCI. One can recognise an NB-ARC domain in the interval 143-453; sequence TNVRVRQLRR…AEGFIQEDEE (311 aa). 192 to 199 provides a ligand contact to ATP; it reads GMGGLGKT.

Belongs to the disease resistance NB-LRR family. RPP13 subfamily.

Functionally, potential disease resistance protein. This is Putative disease resistance RPP13-like protein 3 (RPP13L3) from Arabidopsis thaliana (Mouse-ear cress).